Reading from the N-terminus, the 506-residue chain is GTPase Der (506 aa).

EngA-type G domains follow at residues 3–166 and 218–391; these read PVVA…GEQL and IKIA…ACAT. GTP-binding positions include 9–16, 56–60, 118–121, 224–231, 271–275, and 336–339; these read GRPNVGKS, DTGGI, NKTD, DTAGV, and NKWD. The 85-residue stretch at 392–476 folds into the KH-like domain; it reads QKTSTSMLTR…PIRIQFQEGN (85 aa).

It belongs to the TRAFAC class TrmE-Era-EngA-EngB-Septin-like GTPase superfamily. EngA (Der) GTPase family. As to quaternary structure, associates with the 50S ribosomal subunit.

GTPase that plays an essential role in the late steps of ribosome biogenesis. The sequence is that of GTPase Der from Actinobacillus pleuropneumoniae serotype 3 (strain JL03).